We begin with the raw amino-acid sequence, 500 residues long: Na(+)/H(+) antiporter NhaB (500 aa).

11 consecutive transmembrane segments (helical) span residues 23–43 (VVICLFLVLNPLLLVTIGPVA), 53–73 (IFTLAMALKCYPLMPGGLLLI), 96–116 (VILLLMFMVAGIHFMKELLLF), 129–149 (AILALLFCVLSAFLSAFLDAL), 150–170 (TVTAVIISAAVGFYAVYHRVA), 205–225 (LLMHGAVGTALGGVCTLVGEP), 238–258 (FVDFFLKVAPVSLPVLGAGLV), 311–331 (ILIICLGLHVAEVGLIGLMVI), 350–370 (FQDAMPFTSLLVVFFAVVAVI), 450–470 (ATPNGQAAFLFLLTSAIAPLI), and 477–497 (MVWMALPYTVVMGGLGWWAVT).

The protein belongs to the NhaB Na(+)/H(+) (TC 2.A.34) antiporter family.

Its subcellular location is the cell inner membrane. The enzyme catalyses 2 Na(+)(in) + 3 H(+)(out) = 2 Na(+)(out) + 3 H(+)(in). In terms of biological role, na(+)/H(+) antiporter that extrudes sodium in exchange for external protons. This is Na(+)/H(+) antiporter NhaB from Pseudomonas putida (strain ATCC 47054 / DSM 6125 / CFBP 8728 / NCIMB 11950 / KT2440).